Reading from the N-terminus, the 506-residue chain is Histidine ammonia-lyase (506 aa).

The 5-imidazolinone (Ala-Gly) cross-link spans 143–145 (ASG). The residue at position 144 (S144) is a 2,3-didehydroalanine (Ser).

It belongs to the PAL/histidase family. In terms of processing, contains an active site 4-methylidene-imidazol-5-one (MIO), which is formed autocatalytically by cyclization and dehydration of residues Ala-Ser-Gly.

The protein resides in the cytoplasm. The enzyme catalyses L-histidine = trans-urocanate + NH4(+). It participates in amino-acid degradation; L-histidine degradation into L-glutamate; N-formimidoyl-L-glutamate from L-histidine: step 1/3. This Salmonella paratyphi C (strain RKS4594) protein is Histidine ammonia-lyase.